We begin with the raw amino-acid sequence, 455 residues long: MNHNNNNYDFDNKNNSIGGGGGSSSRSSSSRSSNRSSSGSSGGSGSNSSSSINNIINSDKDFITERKQTKSPPLTLPNIKTTTTTTTTTTTTTTTTTKNENISSSESENSSSRVESPNCNKKVKKTKTITISPTGYNINSKDDINKFTTYGYTNEKSNARRDPKWITDIIERYNRLKSESPNNNYNGSSNNNNNINNINNNSNNTTSPCQSPSSNTATITSISSPTSSSSSLSSPSPSFSINNIVNQDVDGCDRMNYTLLSQNNNNNNNNNYNNNNNNNNNNNNNNNNTNTNNNGDECIVKPISLIQNKKSGQRSLKTKEHKEILEALYRVTLYPTSEETKIISQILGMTFGQVKSSFRHRREKLSKSGLFSYAKNLKNCGKCTVPLDNFFENCKYLTTKETEEFAAAYDVSFEQIKNYFKGKRAILNKLSSKANQDNDNNNNNENNDDSYSDEG.

Low complexity-rich tracts occupy residues 1 to 16 (MNHN…KNNS), 24 to 39 (SSRS…SSSG), 81 to 118 (TTTT…ESPN), 179 to 239 (ESPN…SPSF), and 263 to 294 (NNNN…TNNN). 4 disordered regions span residues 1–53 (MNHN…SSIN), 67–121 (KQTK…NCNK), 178–239 (SESP…SPSF), and 258–296 (TLLS…NNGD). 2 consecutive DNA-binding regions (homeobox) follow at residues 310–369 (KSGQ…SKSG) and 372–431 (SYAK…NKLS). The segment at 431–455 (SSKANQDNDNNNNNENNDDSYSDEG) is disordered. The span at 435–445 (NQDNDNNNNNE) shows a compositional bias: low complexity. Acidic residues predominate over residues 446 to 455 (NNDDSYSDEG).

The protein resides in the nucleus. Putative transcription factor. This Dictyostelium discoideum (Social amoeba) protein is Homeobox protein 14 (hbx14).